Consider the following 236-residue polypeptide: Purine nucleoside phosphorylase DeoD-type 2 (236 aa).

His5 contacts a purine D-ribonucleoside. Residues Gly21, Arg25, Arg44, and 88–91 each bind phosphate; that span reads RVGS. A purine D-ribonucleoside-binding positions include 180–182 and 204–205; these read DME and SD. Asp205 serves as the catalytic Proton donor.

This sequence belongs to the PNP/UDP phosphorylase family. Homohexamer; trimer of homodimers.

The catalysed reaction is a purine D-ribonucleoside + phosphate = a purine nucleobase + alpha-D-ribose 1-phosphate. It carries out the reaction a purine 2'-deoxy-D-ribonucleoside + phosphate = a purine nucleobase + 2-deoxy-alpha-D-ribose 1-phosphate. Catalyzes the reversible phosphorolytic breakdown of the N-glycosidic bond in the beta-(deoxy)ribonucleoside molecules, with the formation of the corresponding free purine bases and pentose-1-phosphate. The chain is Purine nucleoside phosphorylase DeoD-type 2 from Vibrio parahaemolyticus serotype O3:K6 (strain RIMD 2210633).